The chain runs to 101 residues: Protein Tat (101 aa).

A compositionally biased stretch (basic and acidic residues) spans 1–12 (MDPVDPRLEPWK). The interval 1-20 (MDPVDPRLEPWKHPGSQPKA) is disordered. Residues 1-24 (MDPVDPRLEPWKHPGSQPKAACTS) form an interaction with human CREBBP region. A transactivation region spans residues 1-48 (MDPVDPRLEPWKHPGSQPKAACTSCYCKKCCFHCQVCFTTKGLGISYG). Zn(2+) is bound by residues C22, C25, and C27. The cysteine-rich stretch occupies residues 22–37 (CTSCYCKKCCFHCQVC). N6-acetyllysine; by host PCAF is present on K28. C30, H33, C34, and C37 together coordinate Zn(2+). Residues 38–48 (FTTKGLGISYG) are core. Basic residues predominate over residues 48 to 57 (GRKKRRQRRR). The tract at residues 48 to 101 (GRKKRRQRRRAPQDSQTHQVSLPKQPASQARGDPTGPKESKKKVERETETDPVD) is disordered. Positions 49 to 57 (RKKRRQRRR) match the Nuclear localization signal, RNA-binding (TAR), and protein transduction motif. The tract at residues 49–86 (RKKRRQRRRAPQDSQTHQVSLPKQPASQARGDPTGPKE) is interaction with the host capping enzyme RNGTT. An N6-acetyllysine; by host EP300 and GCN5L2 mark is found at K50 and K51. Asymmetric dimethylarginine; by host PRMT6 is present on residues R52 and R53. A compositionally biased stretch (polar residues) spans 60–75 (QDSQTHQVSLPKQPAS). A Glycyl lysine isopeptide (Lys-Gly) (interchain with G-Cter in ubiquitin) cross-link involves residue K71. The Cell attachment site signature appears at 78 to 80 (RGD). The segment covering 83 to 101 (GPKESKKKVERETETDPVD) has biased composition (basic and acidic residues).

The protein belongs to the lentiviruses Tat family. As to quaternary structure, interacts with host CCNT1. Associates with the P-TEFb complex composed at least of Tat, P-TEFb (CDK9 and CCNT1), TAR RNA, RNA Pol II. Recruits the HATs CREBBP, TAF1/TFIID, EP300, PCAF and GCN5L2. Interacts with host KAT5/Tip60; this interaction targets the latter to degradation. Interacts with the host deacetylase SIRT1. Interacts with host capping enzyme RNGTT; this interaction stimulates RNGTT. Binds to host KDR, and to the host integrins ITGAV/ITGB3 and ITGA5/ITGB1. Interacts with host KPNB1/importin beta-1 without previous binding to KPNA1/importin alpha-1. Interacts with EIF2AK2. Interacts with host nucleosome assembly protein NAP1L1; this interaction may be required for the transport of Tat within the nucleus, since the two proteins interact at the nuclear rim. Interacts with host C1QBP/SF2P32; this interaction involves lysine-acetylated Tat. Interacts with the host chemokine receptors CCR2, CCR3 and CXCR4. Interacts with host DPP4/CD26; this interaction may trigger an anti-proliferative effect. Interacts with host LDLR. Interacts with the host extracellular matrix metalloproteinase MMP1. Interacts with host PRMT6; this interaction mediates Tat's methylation. Interacts with, and is ubiquitinated by MDM2/Hdm2. Interacts with host PSMC3 and HTATIP2. Interacts with STAB1; this interaction may overcome SATB1-mediated repression of IL2 and IL2RA (interleukin) in T cells by binding to the same domain than HDAC1. Interacts (when acetylated) with human CDK13, thereby increasing HIV-1 mRNA splicing and promoting the production of the doubly spliced HIV-1 protein Nef. Interacts with host TBP; this interaction modulates the activity of transcriptional pre-initiation complex. Interacts with host RELA. Interacts with host PLSCR1; this interaction negatively regulates Tat transactivation activity by altering its subcellular distribution. Asymmetrical arginine methylation by host PRMT6 seems to diminish the transactivation capacity of Tat and affects the interaction with host CCNT1. In terms of processing, acetylation by EP300, CREBBP, GCN5L2/GCN5 and PCAF regulates the transactivation activity of Tat. EP300-mediated acetylation of Lys-50 promotes dissociation of Tat from the TAR RNA through the competitive binding to PCAF's bromodomain. In addition, the non-acetylated Tat's N-terminus can also interact with PCAF. PCAF-mediated acetylation of Lys-28 enhances Tat's binding to CCNT1. Lys-50 is deacetylated by SIRT1. Post-translationally, polyubiquitination by host MDM2 does not target Tat to degradation, but activates its transactivation function and fosters interaction with CCNT1 and TAR RNA. Phosphorylated by EIF2AK2 on serine and threonine residues adjacent to the basic region important for TAR RNA binding and function. Phosphorylation of Tat by EIF2AK2 is dependent on the prior activation of EIF2AK2 by dsRNA.

It localises to the host nucleus. It is found in the host nucleolus. The protein resides in the host cytoplasm. The protein localises to the secreted. Functionally, transcriptional activator that increases RNA Pol II processivity, thereby increasing the level of full-length viral transcripts. Recognizes a hairpin structure at the 5'-LTR of the nascent viral mRNAs referred to as the transactivation responsive RNA element (TAR) and recruits the cyclin T1-CDK9 complex (P-TEFb complex) that will in turn hyperphosphorylate the RNA polymerase II to allow efficient elongation. The CDK9 component of P-TEFb and other Tat-activated kinases hyperphosphorylate the C-terminus of RNA Pol II that becomes stabilized and much more processive. Other factors such as HTATSF1/Tat-SF1, SUPT5H/SPT5, and HTATIP2 are also important for Tat's function. Besides its effect on RNA Pol II processivity, Tat induces chromatin remodeling of proviral genes by recruiting the histone acetyltransferases (HATs) CREBBP, EP300 and PCAF to the chromatin. This also contributes to the increase in proviral transcription rate, especially when the provirus integrates in transcriptionally silent region of the host genome. To ensure maximal activation of the LTR, Tat mediates nuclear translocation of NF-kappa-B by interacting with host RELA. Through its interaction with host TBP, Tat may also modulate transcription initiation. Tat can reactivate a latently infected cell by penetrating in it and transactivating its LTR promoter. In the cytoplasm, Tat is thought to act as a translational activator of HIV-1 mRNAs. Its function is as follows. Extracellular circulating Tat can be endocytosed by surrounding uninfected cells via the binding to several surface receptors such as CD26, CXCR4, heparan sulfate proteoglycans (HSPG) or LDLR. Neurons are rarely infected, but they internalize Tat via their LDLR. Through its interaction with nuclear HATs, Tat is potentially able to control the acetylation-dependent cellular gene expression. Modulates the expression of many cellular genes involved in cell survival, proliferation or in coding for cytokines or cytokine receptors. Tat plays a role in T-cell and neurons apoptosis. Tat induced neurotoxicity and apoptosis probably contribute to neuroAIDS. Circulating Tat also acts as a chemokine-like and/or growth factor-like molecule that binds to specific receptors on the surface of the cells, affecting many cellular pathways. In the vascular system, Tat binds to ITGAV/ITGB3 and ITGA5/ITGB1 integrins dimers at the surface of endothelial cells and competes with bFGF for heparin-binding sites, leading to an excess of soluble bFGF. This is Protein Tat from Homo sapiens (Human).